The following is a 518-amino-acid chain: Transcription factor TT8 (518 aa).

Coiled-coil stretches lie at residues 220–240 (EVHE…MSEE) and 405–428 (VNHL…KRTR). The bHLH domain maps to 359–408 (REDLSHVVAERRRREKLNEKFITLRSMVPFVTKMDKVSILGDTIAYVNHL).

This sequence belongs to the bHLH protein family. In terms of assembly, homodimer. Interacts with MYB4, MYB5, MYB6, MYB82, MYB113, MYB114, MYB75/PAP1, MYB90/PAP2, and TT2. Buds, flowers and developing siliques, but not in leaves, stems and roots.

The protein resides in the nucleus. In terms of biological role, transcription activator, when associated with MYB75/PAP1 or MYB90/PAP2. Involved in the control of flavonoid pigmentation. Plays a key role in regulating leucoanthocyanidin reductase (BANYULS) and dihydroflavonol-4-reductase (DFR). Not required for leucoanthocyanidin dioxygenase (LDOX) expression. The sequence is that of Transcription factor TT8 from Arabidopsis thaliana (Mouse-ear cress).